Reading from the N-terminus, the 212-residue chain is Nascent polypeptide-associated complex subunit alpha (212 aa).

Disordered stretches follow at residues methionine 1–glutamate 54 and glutamine 123–aspartate 177. A compositionally biased stretch (acidic residues) spans alanine 22–glutamate 38. The NAC-A/B domain maps to serine 51–alanine 116. Basic and acidic residues predominate over residues glutamate 128–lysine 157. Acidic residues predominate over residues lysine 158 to aspartate 169. The UBA domain maps to leucine 173–isoleucine 212.

The protein belongs to the NAC-alpha family. Part of the nascent polypeptide-associated complex (NAC), consisting of EGD2 and EGD1. NAC associates with ribosomes via EGD1.

Its subcellular location is the cytoplasm. It localises to the nucleus. In terms of biological role, component of the nascent polypeptide-associated complex (NAC), a dynamic component of the ribosomal exit tunnel, protecting the emerging polypeptides from interaction with other cytoplasmic proteins to ensure appropriate nascent protein targeting. The NAC complex also promotes mitochondrial protein import by enhancing productive ribosome interactions with the outer mitochondrial membrane and blocks the inappropriate interaction of ribosomes translating non-secretory nascent polypeptides with translocation sites in the membrane of the endoplasmic reticulum. EGD2 may also be involved in transcription regulation. This Botryotinia fuckeliana (strain B05.10) (Noble rot fungus) protein is Nascent polypeptide-associated complex subunit alpha (egd2).